We begin with the raw amino-acid sequence, 29 residues long: U1-pseudomyrmecitoxin-Pt1 subunit SS2 (29 aa).

It belongs to the myrmexin family. As to quaternary structure, heterodimer composed of subunit SS2 and subunit LS1 (U1-PSDTX-Pt1e), and heterodimer composed of subunit SS2 and LS2 (U1-PSDTX-Pt1c); disulfide-linked. Expressed by the venom gland.

Its subcellular location is the secreted. In terms of biological role, this heterodimer may have anti-inflammatory properties, since the myrmexin complex (composed of 6 SS-LS heterodimers) inhibits carrageenin-induced edema in a dose-dependent manner (after subcutaneous injection into rats). The protein is U1-pseudomyrmecitoxin-Pt1 subunit SS2 of Pseudomyrmex triplarinus (Ant).